The following is a 574-amino-acid chain: MRWSRFFAYTQKEAPKDAVVASHKYLVRGGYIKQVAAGIYDFAPLGKMVLDNIRDIIKKEMDASGAQEVMLTFVTPNELWEETGRAKKYGKELLRIKDRKDQSFVLAPTNEESVVDLVRGTIKSYKQLPVNLYQINLKFRDEARPRFGLLRGREFIMKDAYSFHATEEDLDREFNLMEETYKNIFTKLGLDFRAVWADSGAIGGSGSKEFMVLADTGEDDIVVCSECDYAANIEVATRKHEKRENPVKTEVIEEVHTPDMKSIEDVCNFIGVDPYFSIKAVVKKAIYDDGKSEIVVFFVRGTDTLEETKATNAVGALELVDASEEELEAVGLVPGFIGPFGLPSSVRYIIDDDLRMAEELVCGANKKDYHIKGAGLLDANLLGNLTVYRDIAAVKEGDKCPKCGAPLKITKGIEVGHIFKLGTVYSEPMNATFLDENGKAKPFIMGCYGIGVSRLISAAIEQNHDDKGIIWPKQIAPFVVDIIVGDVKKDEQLIFAEDLYDKLTSAGVKTILDDRAERFGPKIADFELVGFPVCVIVGKKLKDGKVEVRDRRTGEKFEVEKDMALEKVMEIINN.

Belongs to the class-II aminoacyl-tRNA synthetase family. ProS type 1 subfamily. As to quaternary structure, homodimer.

Its subcellular location is the cytoplasm. The catalysed reaction is tRNA(Pro) + L-proline + ATP = L-prolyl-tRNA(Pro) + AMP + diphosphate. Functionally, catalyzes the attachment of proline to tRNA(Pro) in a two-step reaction: proline is first activated by ATP to form Pro-AMP and then transferred to the acceptor end of tRNA(Pro). As ProRS can inadvertently accommodate and process non-cognate amino acids such as alanine and cysteine, to avoid such errors it has two additional distinct editing activities against alanine. One activity is designated as 'pretransfer' editing and involves the tRNA(Pro)-independent hydrolysis of activated Ala-AMP. The other activity is designated 'posttransfer' editing and involves deacylation of mischarged Ala-tRNA(Pro). The misacylated Cys-tRNA(Pro) is not edited by ProRS. The polypeptide is Proline--tRNA ligase (Nautilia profundicola (strain ATCC BAA-1463 / DSM 18972 / AmH)).